The following is a 560-amino-acid chain: Dihydroxy-acid dehydratase (560 aa).

Residue Cys-52 participates in [2Fe-2S] cluster binding. Asp-84 is a binding site for Mg(2+). Cys-125 contributes to the [2Fe-2S] cluster binding site. Positions 126 and 127 each coordinate Mg(2+). At Lys-127 the chain carries N6-carboxylysine. Cys-197 contributes to the [2Fe-2S] cluster binding site. Glu-449 is a binding site for Mg(2+). Ser-475 acts as the Proton acceptor in catalysis.

Belongs to the IlvD/Edd family. As to quaternary structure, homodimer. [2Fe-2S] cluster serves as cofactor. The cofactor is Mg(2+).

It carries out the reaction (2R)-2,3-dihydroxy-3-methylbutanoate = 3-methyl-2-oxobutanoate + H2O. The enzyme catalyses (2R,3R)-2,3-dihydroxy-3-methylpentanoate = (S)-3-methyl-2-oxopentanoate + H2O. It functions in the pathway amino-acid biosynthesis; L-isoleucine biosynthesis; L-isoleucine from 2-oxobutanoate: step 3/4. The protein operates within amino-acid biosynthesis; L-valine biosynthesis; L-valine from pyruvate: step 3/4. In terms of biological role, functions in the biosynthesis of branched-chain amino acids. Catalyzes the dehydration of (2R,3R)-2,3-dihydroxy-3-methylpentanoate (2,3-dihydroxy-3-methylvalerate) into 2-oxo-3-methylpentanoate (2-oxo-3-methylvalerate) and of (2R)-2,3-dihydroxy-3-methylbutanoate (2,3-dihydroxyisovalerate) into 2-oxo-3-methylbutanoate (2-oxoisovalerate), the penultimate precursor to L-isoleucine and L-valine, respectively. This chain is Dihydroxy-acid dehydratase, found in Sulfurisphaera tokodaii (strain DSM 16993 / JCM 10545 / NBRC 100140 / 7) (Sulfolobus tokodaii).